The following is a 124-amino-acid chain: Putative peptidyl-tRNA hydrolase (124 aa).

This sequence belongs to the PTH2 family.

It catalyses the reaction an N-acyl-L-alpha-aminoacyl-tRNA + H2O = an N-acyl-L-amino acid + a tRNA + H(+). The sequence is that of Putative peptidyl-tRNA hydrolase from Fowlpox virus (strain NVSL) (FPV).